Consider the following 250-residue polypeptide: Adenosylcobinamide-GDP ribazoletransferase (250 aa).

The next 6 membrane-spanning stretches (helical) occupy residues 32–52 (KGIIYFPVVGGIIGALLMVAY), 59–79 (LAHSLSALLTVGFFVFLTGGL), 113–133 (GVLAMVFILLLKLYGIQGLGE), 136–156 (IYWGIILMPVMGRQAIVYGCY), 185–205 (LTFILAAMHLPSLIFALLLPI), and 230–250 (CELTEGCYLLFILLITGAGLF).

Belongs to the CobS family. Requires Mg(2+) as cofactor.

The protein resides in the cell membrane. It carries out the reaction alpha-ribazole + adenosylcob(III)inamide-GDP = adenosylcob(III)alamin + GMP + H(+). It catalyses the reaction alpha-ribazole 5'-phosphate + adenosylcob(III)inamide-GDP = adenosylcob(III)alamin 5'-phosphate + GMP + H(+). It functions in the pathway cofactor biosynthesis; adenosylcobalamin biosynthesis; adenosylcobalamin from cob(II)yrinate a,c-diamide: step 7/7. Joins adenosylcobinamide-GDP and alpha-ribazole to generate adenosylcobalamin (Ado-cobalamin). Also synthesizes adenosylcobalamin 5'-phosphate from adenosylcobinamide-GDP and alpha-ribazole 5'-phosphate. The polypeptide is Adenosylcobinamide-GDP ribazoletransferase (Alkaliphilus metalliredigens (strain QYMF)).